The sequence spans 228 residues: Ion-translocating oxidoreductase complex subunit E (228 aa).

The next 5 membrane-spanning stretches (helical) occupy residues 24–44, 73–93, 95–115, 130–150, and 184–204; these read LLGLCPLLAISGTVVNALGLG, VFVLIIASVVTAIELAMNAFF, ELYLILGIFIPLIVTNCAIIG, LADGLAMGLGFTCVLVALGAL, and GFLLALLPPGAFIALGLLIAL.

The protein belongs to the NqrDE/RnfAE family. As to quaternary structure, the complex is composed of six subunits: RnfA, RnfB, RnfC, RnfD, RnfE and RnfG.

The protein resides in the cell inner membrane. In terms of biological role, part of a membrane-bound complex that couples electron transfer with translocation of ions across the membrane. This Thioalkalivibrio sulfidiphilus (strain HL-EbGR7) protein is Ion-translocating oxidoreductase complex subunit E.